The chain runs to 747 residues: Cysteine--tRNA ligase, cytoplasmic (747 aa).

Residues 1–25 (MTDSWERGKGRRTQPPWSAPNTQAQ) are disordered. The segment covering 15–25 (PPWSAPNTQAQ) has biased composition (polar residues). Cys-54 serves as a coordination point for Zn(2+). Gly-55 provides a ligand contact to L-cysteine. The 'HIGH' region signature appears at 56 to 66 (PTVYDASHMGH). Thr-95 lines the L-cysteine pocket. The 'KIIK' region signature appears at 100–103 (KIIK). Positions 347, 372, and 376 each coordinate Zn(2+). His-372 is an L-cysteine binding site. Residues 405–409 (KMSKS) carry the 'KMSKS' region motif. Lys-408 is an ATP binding site. Over residues 651-683 (EEKRKAEEEKQRKKEEAARKKQQQEAAKLEKMK) the composition is skewed to basic and acidic residues. Residues 651–722 (EEKRKAEEEK…KELSKGQSKK (72 aa)) are disordered.

Belongs to the class-I aminoacyl-tRNA synthetase family. In terms of assembly, homodimer. It depends on Zn(2+) as a cofactor.

Its subcellular location is the cytoplasm. It catalyses the reaction tRNA(Cys) + L-cysteine + ATP = L-cysteinyl-tRNA(Cys) + AMP + diphosphate. Functionally, catalyzes the ATP-dependent ligation of cysteine to tRNA(Cys). The sequence is that of Cysteine--tRNA ligase, cytoplasmic (cars1) from Xenopus tropicalis (Western clawed frog).